A 213-amino-acid chain; its full sequence is Phosphoribosylformylglycinamidine synthase subunit PurQ (213 aa).

A Glutamine amidotransferase type-1 domain is found at 5 to 213 (ACVVVYPGSN…FQSILNYLKR (209 aa)). C86 functions as the Nucleophile in the catalytic mechanism. Active-site residues include H186 and E188.

As to quaternary structure, part of the FGAM synthase complex composed of 1 PurL, 1 PurQ and 2 PurS subunits.

It is found in the cytoplasm. It catalyses the reaction N(2)-formyl-N(1)-(5-phospho-beta-D-ribosyl)glycinamide + L-glutamine + ATP + H2O = 2-formamido-N(1)-(5-O-phospho-beta-D-ribosyl)acetamidine + L-glutamate + ADP + phosphate + H(+). The catalysed reaction is L-glutamine + H2O = L-glutamate + NH4(+). It functions in the pathway purine metabolism; IMP biosynthesis via de novo pathway; 5-amino-1-(5-phospho-D-ribosyl)imidazole from N(2)-formyl-N(1)-(5-phospho-D-ribosyl)glycinamide: step 1/2. Functionally, part of the phosphoribosylformylglycinamidine synthase complex involved in the purines biosynthetic pathway. Catalyzes the ATP-dependent conversion of formylglycinamide ribonucleotide (FGAR) and glutamine to yield formylglycinamidine ribonucleotide (FGAM) and glutamate. The FGAM synthase complex is composed of three subunits. PurQ produces an ammonia molecule by converting glutamine to glutamate. PurL transfers the ammonia molecule to FGAR to form FGAM in an ATP-dependent manner. PurS interacts with PurQ and PurL and is thought to assist in the transfer of the ammonia molecule from PurQ to PurL. The polypeptide is Phosphoribosylformylglycinamidine synthase subunit PurQ (Thermotoga maritima (strain ATCC 43589 / DSM 3109 / JCM 10099 / NBRC 100826 / MSB8)).